We begin with the raw amino-acid sequence, 1174 residues long: Male determiner protein Mdmd(II) (1174 aa).

A compositionally biased stretch (basic and acidic residues) spans 1-15; the sequence is MNATDAESRKPENKP. Disordered regions lie at residues 1 to 51, 80 to 109, and 136 to 259; these read MNAT…SGQR, KDGS…HPVE, and KQLS…LRRS. Low complexity predominate over residues 16–35; that stretch reads SSESSSSGSTSGSSDGEVSS. Residues 36 to 47 are compositionally biased toward polar residues; the sequence is KTYFKNNKSKVL. Positions 80–92 are enriched in basic and acidic residues; that stretch reads KDGSNEMLPKEDS. The span at 93-102 shows a compositional bias: polar residues; it reads INTNHNYTTD. A compositionally biased stretch (low complexity) spans 138 to 153; that stretch reads LSAYRSRSRSTRLSYS. The span at 183–200 shows a compositional bias: basic and acidic residues; sequence HGRDSSTTKRSVSRDKDN. Basic residues predominate over residues 201–223; the sequence is RLRRRIGSSRSHTRSHSRFRRSE. Residues 235 to 259 are compositionally biased toward basic and acidic residues; that stretch reads RSQERRHERRRSMSSDYERIALRRS. The 184-residue stretch at 348–531 folds into the MIF4G domain; it reads KKYIHGYINK…KVLFQVRRDG (184 aa). Residues 597–608 show a composition bias toward low complexity; the sequence is DSDGSFGSGSNS. The disordered stretch occupies residues 597–616; it reads DSDGSFGSGSNSETALSDCD. The MI domain occupies 641 to 757; sequence ALRRTIYLTL…SWDVLDCIKL (117 aa). Low complexity predominate over residues 840-857; the sequence is SAPSSSSSSSLSSELSAP. 2 disordered regions span residues 840–1045 and 1095–1133; these read SAPS…SRTK and RKDN…NHSR. Over residues 869 to 909 the composition is skewed to basic residues; sequence KKKHKGKNKKMTKKKNPSKKKEKTKKIVGKNKIAAKNKTIK. The segment covering 910–924 has biased composition (basic and acidic residues); sequence RRTDKDNSSSKDNFL. Positions 926-957 are enriched in low complexity; the sequence is SESSSNESISLDSLSSELFAPSSYSSSESSND. The span at 963–1001 shows a compositional bias: basic residues; sequence KHKGKNKKMTKKKNPSNKREKTKKKLSKNKKAPNKNTKK. The span at 1010-1020 shows a compositional bias: low complexity; that stretch reads SSESSISESKS. A compositionally biased stretch (basic residues) spans 1034 to 1045; the sequence is RKKRVTSKSRTK. Residues 1095 to 1118 show a composition bias toward basic and acidic residues; the sequence is RKDNYGNRQNHEISQRHDSEIKRR. The span at 1119 to 1130 shows a compositional bias: basic residues; sequence REERKKRHHEKN.

It belongs to the CWC22 family. In terms of assembly, component of the spliceosome C complex.

Its subcellular location is the nucleus speckle. Its function is as follows. Male determiner protein (M-factor) that controls male somatic sexual differentiation. Acts as a dominant factor that regulates the mRNA splicing of transformer (tra) and doublesex (dsx) transcripts and promotes expression of male splice forms of tra and dsx. Probably acts as a component of the spliceosome C complex required for mRNA splicing factor and exon-junction complex (EJC) assembly. Hinders eIF4AIII from non-specifically binding RNA and escorts it to the splicing machinery to promote EJC assembly on mature mRNAs. In Musca domestica (House fly), this protein is Male determiner protein Mdmd(II).